A 385-amino-acid chain; its full sequence is Cytochrome b (385 aa).

Over 1–27 (MRLLKSHPLLKLVNSYLIDASQPSNIS) the chain is Mitochondrial matrix. Residue Y16 participates in a ubiquinone binding. A helical transmembrane segment spans residues 28–51 (YLWNFGSLLACCLIIQIVTGVTLA). The Mitochondrial intermembrane portion of the chain corresponds to 52-74 (MHYSPNVLEAFNSIEHIMRDVNN). Residues 75-102 (GWLVRYLHSNTASAFFFLVYLHIGRGMY) form a helical membrane-spanning segment. Residues H82 and H96 each coordinate heme b. Topologically, residues 103–110 (YGSYRAPR) are mitochondrial matrix. The helical transmembrane segment at 111 to 135 (TLVWAIGTVILILMMATAFLGYVLP) threads the bilayer. The Mitochondrial intermembrane segment spans residues 136 to 172 (YGQMSLWGATVITNLISAIPWIGQDIVEFIWGGFSVN). Residues 173 to 205 (NATLNRFFALHFVLPFILAALVLMHLIALHDTA) form a helical membrane-spanning segment. 2 residues coordinate heme b: H183 and H197. H202 serves as a coordination point for a ubiquinone. Over 206–224 (GSSNPLGVSGNYDRITFAP) the chain is Mitochondrial matrix. Residues 225–247 (YYLFKDLITIFIFIYVLSSFVFF) form a helical membrane-spanning segment. At 248-288 (MPNVLGDSENYIMANPMQTPPAIVPEWYLLPFYAILRSIPN) the chain is on the mitochondrial intermembrane side. Residues 289–309 (KLLGVIAMFSAILAIMLLPIT) form a helical membrane-spanning segment. At 310–320 (DLGRSKGLQFR) the chain is on the mitochondrial matrix side. The chain crosses the membrane as a helical span at residues 321–341 (PLSKFAFWAFVVNFLILMKLG). Residues 342–348 (ACHVESP) are Mitochondrial intermembrane-facing. A helical membrane pass occupies residues 349–365 (FIELGQFSTIFYFSYFI). Over 366 to 385 (FIVPVLSLIENTLVDLNYLK) the chain is Mitochondrial matrix.

This sequence belongs to the cytochrome b family. In terms of assembly, component of the ubiquinol-cytochrome c oxidoreductase (cytochrome b-c1 complex, complex III, CIII), a multisubunit enzyme composed of 10 subunits. The complex is composed of 3 respiratory subunits cytochrome b (cob), cytochrome c1 (cyt-1) and Rieske protein (fes-1), 2 core protein subunits pep and ucr-1, and 5 low-molecular weight protein subunits qcr6, qcr7, qcr8, qcr9 and probably NCU16844/qcr10. The complex exists as an obligatory dimer and forms supercomplexes (SCs) in the inner mitochondrial membrane with NADH-ubiquinone oxidoreductase (complex I, CI) and cytochrome c oxidase (complex IV, CIV), resulting in different assemblies (supercomplexes SCI(1)III(2), SCIII(2)IV(1) and SCIII(2)IV(2) as well as higher order I(x)III(y)IV(z) megacomplexes). Heme b serves as cofactor.

It localises to the mitochondrion inner membrane. It catalyses the reaction a quinol + 2 Fe(III)-[cytochrome c](out) = a quinone + 2 Fe(II)-[cytochrome c](out) + 2 H(+)(out). Functionally, component of the ubiquinol-cytochrome c oxidoreductase, a multisubunit transmembrane complex that is part of the mitochondrial electron transport chain which drives oxidative phosphorylation. The respiratory chain contains 3 multisubunit complexes succinate dehydrogenase (complex II, CII), ubiquinol-cytochrome c oxidoreductase (cytochrome b-c1 complex, complex III, CIII) and cytochrome c oxidase (complex IV, CIV), that cooperate to transfer electrons derived from NADH and succinate to molecular oxygen, creating an electrochemical gradient over the inner membrane that drives transmembrane transport and the ATP synthase. The cytochrome b-c1 complex catalyzes electron transfer from ubiquinol to cytochrome c, linking this redox reaction to translocation of protons across the mitochondrial inner membrane, with protons being carried across the membrane as hydrogens on the quinol. In the process called Q cycle, 2 protons are consumed from the matrix, 4 protons are released into the intermembrane space and 2 electrons are passed to cytochrome c. Cytochrome b is a catalytic core subunit containing 2 b-type hemes BL and BH topographically segregated in the quinone reduction (Qi) and quinol oxidation (Q0) sites on opposite sides of the membrane. The chain is Cytochrome b (cob) from Neurospora crassa (strain ATCC 24698 / 74-OR23-1A / CBS 708.71 / DSM 1257 / FGSC 987).